Reading from the N-terminus, the 308-residue chain is N-acetyl-gamma-glutamyl-phosphate reductase (308 aa).

C116 is a catalytic residue.

The protein belongs to the NAGSA dehydrogenase family. Type 2 subfamily.

The protein localises to the cytoplasm. The catalysed reaction is N-acetyl-L-glutamate 5-semialdehyde + phosphate + NADP(+) = N-acetyl-L-glutamyl 5-phosphate + NADPH + H(+). It functions in the pathway amino-acid biosynthesis; L-arginine biosynthesis; N(2)-acetyl-L-ornithine from L-glutamate: step 3/4. In terms of biological role, catalyzes the NADPH-dependent reduction of N-acetyl-5-glutamyl phosphate to yield N-acetyl-L-glutamate 5-semialdehyde. This is N-acetyl-gamma-glutamyl-phosphate reductase from Mesorhizobium japonicum (strain LMG 29417 / CECT 9101 / MAFF 303099) (Mesorhizobium loti (strain MAFF 303099)).